The primary structure comprises 359 residues: sn-1 linoleoyl-lipid 6-desaturase (359 aa).

2 helical membrane passes run 45–65 (LIIV…PVIF) and 69–89 (LLGC…VGHD). The Histidine box-1 signature appears at 88–92 (HDANH). The Histidine box-2 signature appears at 123–128 (HNYLHH). 3 consecutive transmembrane segments (helical) span residues 165 to 185 (IWGL…YLVL), 206 to 226 (LLGI…ALGF), and 231 to 251 (VLIG…TIFM). The Histidine box-3 signature appears at 306 to 310 (HHLFP).

The protein belongs to the fatty acid desaturase type 2 family. It depends on Fe(2+) as a cofactor.

Its subcellular location is the membrane. The catalysed reaction is a 1-[(9Z,12Z)-octadecdienoyl]-2-acyl-glycerolipid + 2 reduced [2Fe-2S]-[ferredoxin] + O2 + 2 H(+) = a 1-[(6Z,9Z,12Z)-octadectrienoyl]-2-acyl-glycerolipid + 2 oxidized [2Fe-2S]-[ferredoxin] + 2 H2O. The protein operates within lipid metabolism; polyunsaturated fatty acid biosynthesis. Its function is as follows. Desaturase involved in fatty acid biosynthesis. Introduces a double bond at carbon 6 of linoleoyl group (18:2) attached to the sn-1 position of the glycerol moiety of membrane glycerolipids, leading to the formation of gamma-linolenic acid (GLA). The polypeptide is sn-1 linoleoyl-lipid 6-desaturase (Synechocystis sp. (strain ATCC 27184 / PCC 6803 / Kazusa)).